The sequence spans 468 residues: Tyrosine phenol-lyase (468 aa).

K260 is modified (N6-(pyridoxal phosphate)lysine).

Belongs to the beta-eliminating lyase family. Homotetramer. Requires pyridoxal 5'-phosphate as cofactor.

It carries out the reaction L-tyrosine + H2O = phenol + pyruvate + NH4(+). This chain is Tyrosine phenol-lyase, found in Lacrimispora saccharolytica (strain ATCC 35040 / DSM 2544 / NRCC 2533 / WM1) (Clostridium saccharolyticum).